A 358-amino-acid chain; its full sequence is Alternative oxidase, mitochondrial (358 aa).

A helical transmembrane segment spans residues 152–172 (LIRMVFLESVAGVPGMVAGML). 3 residues coordinate Fe cation: glutamate 159, glutamate 198, and histidine 201. Residues 217–237 (FMIIGAQGVFFNSMFLSYLIS) form a helical membrane-spanning segment. Glutamate 249, glutamate 250, glutamate 306, and histidine 309 together coordinate Fe cation.

This sequence belongs to the alternative oxidase family. Fe cation serves as cofactor.

Its subcellular location is the mitochondrion inner membrane. Catalyzes cyanide-resistant oxygen consumption. May increase respiration when the cytochrome respiratory pathway is restricted, or in response to low temperatures. The polypeptide is Alternative oxidase, mitochondrial (Blumeria graminis (Powdery mildew)).